Consider the following 562-residue polypeptide: Urocanate hydratase (562 aa).

Residues 52–53, glutamine 130, 176–178, glutamate 196, arginine 201, 242–243, 263–267, 273–274, and tyrosine 322 each bind NAD(+); these read GG, GMG, NA, QTSAH, and YL. Residue cysteine 410 is part of the active site. Glycine 492 contacts NAD(+).

It belongs to the urocanase family. It depends on NAD(+) as a cofactor.

The protein localises to the cytoplasm. The catalysed reaction is 4-imidazolone-5-propanoate = trans-urocanate + H2O. It participates in amino-acid degradation; L-histidine degradation into L-glutamate; N-formimidoyl-L-glutamate from L-histidine: step 2/3. Functionally, catalyzes the conversion of urocanate to 4-imidazolone-5-propionate. This is Urocanate hydratase from Klebsiella pneumoniae subsp. pneumoniae (strain ATCC 700721 / MGH 78578).